Reading from the N-terminus, the 146-residue chain is Large ribosomal subunit protein bL9 (146 aa).

Belongs to the bacterial ribosomal protein bL9 family.

Its function is as follows. Binds to the 23S rRNA. In Deinococcus deserti (strain DSM 17065 / CIP 109153 / LMG 22923 / VCD115), this protein is Large ribosomal subunit protein bL9.